A 234-amino-acid polypeptide reads, in one-letter code: Large ribosomal subunit protein uL1 (234 aa).

This sequence belongs to the universal ribosomal protein uL1 family. Part of the 50S ribosomal subunit.

Binds directly to 23S rRNA. The L1 stalk is quite mobile in the ribosome, and is involved in E site tRNA release. In terms of biological role, protein L1 is also a translational repressor protein, it controls the translation of the L11 operon by binding to its mRNA. This chain is Large ribosomal subunit protein uL1, found in Corynebacterium aurimucosum (strain ATCC 700975 / DSM 44827 / CIP 107346 / CN-1) (Corynebacterium nigricans).